A 780-amino-acid chain; its full sequence is ATP-dependent 6-phosphofructokinase, muscle type (780 aa).

Threonine 2 is subject to N-acetylthreonine. The tract at residues 2–390 (THEEHHATKT…NWEVYKLLAH (389 aa)) is N-terminal catalytic PFK domain 1. Residues glycine 25, 88 to 89 (RC), and 118 to 121 (GDGS) each bind ATP. Residue aspartate 119 coordinates Mg(2+). At serine 133 the chain carries Phosphoserine. Substrate contacts are provided by residues 164–166 (SID), arginine 201, 208–210 (MGR), glutamate 264, arginine 292, and 298–301 (HVQR). Catalysis depends on aspartate 166, which acts as the Proton acceptor. Residue serine 377 is modified to Phosphoserine. Positions 391-401 (VRPPVSKSGSH) are interdomain linker. Residues 402 to 780 (TVAVMNVGAP…TRKRSGEAAV (379 aa)) are C-terminal regulatory PFK domain 2. Residues arginine 471 and 528–532 (TVSNN) contribute to the beta-D-fructose 2,6-bisphosphate site. An O-linked (GlcNAc) serine glycan is attached at serine 530. N6-(2-hydroxyisobutyryl)lysine is present on lysine 557. Residues arginine 566, 573-575 (MGG), glutamate 629, arginine 655, and 661-664 (HMQQ) each bind beta-D-fructose 2,6-bisphosphate. Serine 667 is modified (phosphoserine). Arginine 735 serves as a coordination point for beta-D-fructose 2,6-bisphosphate. Serine 775 is subject to Phosphoserine.

It belongs to the phosphofructokinase type A (PFKA) family. ATP-dependent PFK group I subfamily. Eukaryotic two domain clade 'E' sub-subfamily. As to quaternary structure, homo- and heterotetramers. Phosphofructokinase (PFK) enzyme functions as a tetramer composed of different combinations of 3 types of subunits, called PFKM (M), PFKL (L) and PFKP (P). The composition of the PFK tetramer differs according to the tissue type it is present in. The kinetic and regulatory properties of the tetrameric enzyme are dependent on the subunit composition, hence can vary across tissues. Interacts (via C-terminus) with HK1 (via N-terminal spermatogenic cell-specific region). Mg(2+) is required as a cofactor. Post-translationally, glcNAcylation decreases enzyme activity.

The protein localises to the cytoplasm. It carries out the reaction beta-D-fructose 6-phosphate + ATP = beta-D-fructose 1,6-bisphosphate + ADP + H(+). It participates in carbohydrate degradation; glycolysis; D-glyceraldehyde 3-phosphate and glycerone phosphate from D-glucose: step 3/4. Its activity is regulated as follows. Allosterically activated by ADP, AMP, or fructose 2,6-bisphosphate, and allosterically inhibited by ATP or citrate. In terms of biological role, catalyzes the phosphorylation of D-fructose 6-phosphate to fructose 1,6-bisphosphate by ATP, the first committing step of glycolysis. This is ATP-dependent 6-phosphofructokinase, muscle type (PFKM) from Pongo abelii (Sumatran orangutan).